The primary structure comprises 98 residues: NADH-ubiquinone oxidoreductase chain 4L (98 aa).

The next 3 membrane-spanning stretches (helical) occupy residues 1 to 21 (MSMV…GLLM), 29 to 49 (SLLC…LTIL), and 61 to 81 (IILL…LVMV).

Belongs to the complex I subunit 4L family. As to quaternary structure, core subunit of respiratory chain NADH dehydrogenase (Complex I) which is composed of 45 different subunits.

The protein localises to the mitochondrion inner membrane. It carries out the reaction a ubiquinone + NADH + 5 H(+)(in) = a ubiquinol + NAD(+) + 4 H(+)(out). Its function is as follows. Core subunit of the mitochondrial membrane respiratory chain NADH dehydrogenase (Complex I) which catalyzes electron transfer from NADH through the respiratory chain, using ubiquinone as an electron acceptor. Part of the enzyme membrane arm which is embedded in the lipid bilayer and involved in proton translocation. The chain is NADH-ubiquinone oxidoreductase chain 4L (MT-ND4L) from Bos indicus (Zebu).